The primary structure comprises 232 residues: uncharacterized protein (232 aa).

A signal peptide spans 1-18 (MGILKSLFTLGKSFISQA). A disordered region spans residues 207–232 (AEAGIGGSNKSSAQDVLARLQRQQGE).

This sequence belongs to the PspA/Vipp/IM30 family.

This is an uncharacterized protein from Escherichia coli O6:H1 (strain CFT073 / ATCC 700928 / UPEC).